A 139-amino-acid polypeptide reads, in one-letter code: Short neuropeptide F (139 aa).

Positions 1-23 (MGRARRTVRAPAQHDALGGHALA) are excised as a propeptide. The segment at 1–48 (MGRARRTVRAPAQHDALGGHALARKSVRSPSRRLRFGRRSDPDMPPQA) is disordered. A compositionally biased stretch (basic residues) spans 22 to 37 (LARKSVRSPSRRLRFG). Position 36 is a phenylalanine amide (Phe-36). Positions 40–62 (SDPDMPPQAPLDEMNELLSLREV) are excised as a propeptide. Phenylalanine amide is present on Phe-70. Positions 74 to 96 (SEERAVPHIFPQEFLTQEQDRAV) are excised as a propeptide. Phe-105 bears the Phenylalanine amide mark. A propeptide spanning residues 109–139 (SDNNMFLLPYESALPQEVKANGSVEDDRQQE) is cleaved from the precursor.

Belongs to the NPY family. As to expression, sNPF peptide 1: Expressed in corpora cardiaca (CC), corpora allata (CA), antennal lobe (AL) and gnathal ganglion (GNG) (at protein level). Expression in AL detected in all animals, in GNG in most animals, expression in CC and CA in some animals (at protein level). sNPF peptide 2: Expressed in corpora cardiaca (CC), corpora allata (CA), antennal lobe (AL) and gnathal ganglion (GNG) (at protein level). Expression in AL detected in all animals, in GNG, CC and CA in most animals (at protein level). sNPF peptide 3: Expressed in corpora cardiaca (CC), corpora allata (CA), antennal lobe (AL) and gnathal ganglion (GNG) (at protein level). Expression detected in all animals (at protein level).

The protein resides in the secreted. Its function is as follows. Plays a role in controlling food intake and regulating body size. The protein is Short neuropeptide F of Agrotis ipsilon (Black cutworm moth).